The chain runs to 831 residues: Phenylalanine--tRNA ligase beta subunit (831 aa).

In terms of domain architecture, tRNA-binding spans 44–155 (GPVDGPVTVG…GAAEPGADGA (112 aa)). The region spanning 414–489 (WSPPPIRMGV…RLEGLEVIPS (76 aa)) is the B5 domain. Asp-467, Asp-473, Glu-476, and Glu-477 together coordinate Mg(2+). Residues 737–830 (SPYPAVFQDV…AAERVGAVLR (94 aa)) enclose the FDX-ACB domain.

Belongs to the phenylalanyl-tRNA synthetase beta subunit family. Type 1 subfamily. Tetramer of two alpha and two beta subunits. It depends on Mg(2+) as a cofactor.

The protein localises to the cytoplasm. The catalysed reaction is tRNA(Phe) + L-phenylalanine + ATP = L-phenylalanyl-tRNA(Phe) + AMP + diphosphate + H(+). The protein is Phenylalanine--tRNA ligase beta subunit of Mycobacterium bovis (strain ATCC BAA-935 / AF2122/97).